The following is a 639-amino-acid chain: Protein phosphatase EYA4 (639 aa).

M1 is subject to N-acetylmethionine. Disordered regions lie at residues M1 to N72, Q210 to G232, and A300 to L368. K14 is covalently cross-linked (Glycyl lysine isopeptide (Lys-Gly) (interchain with G-Cter in SUMO2)). Polar residues predominate over residues E18–M30. A Glycyl lysine isopeptide (Lys-Gly) (interchain with G-Cter in SUMO2) cross-link involves residue K52. The span at S56 to N66 shows a compositional bias: low complexity. Residues A300–T334 are compositionally biased toward polar residues. Residue S361 is modified to Phosphoserine. The active-site Nucleophile is D375. 3 residues coordinate Mg(2+): D375, D377, and D603. The active-site Proton donor is the D377.

The protein belongs to the HAD-like hydrolase superfamily. EYA family. In terms of assembly, interacts with SIX3; translocates EYA4 from the cytoplasm to the nucleus and promotes activation of their target genes. Mg(2+) serves as cofactor. As to expression, highly expressed in heart and skeletal muscle.

The protein resides in the cytoplasm. The protein localises to the nucleus. It carries out the reaction O-phospho-L-tyrosyl-[protein] + H2O = L-tyrosyl-[protein] + phosphate. In terms of biological role, tyrosine phosphatase that specifically dephosphorylates 'Tyr-142' of histone H2AX (H2AXY142ph). 'Tyr-142' phosphorylation of histone H2AX plays a central role in DNA repair and acts as a mark that distinguishes between apoptotic and repair responses to genotoxic stress. Promotes efficient DNA repair by dephosphorylating H2AX, promoting the recruitment of DNA repair complexes containing MDC1. Its function as histone phosphatase probably explains its role in transcription regulation during organogenesis. May be involved in development of the eye. This chain is Protein phosphatase EYA4 (EYA4), found in Homo sapiens (Human).